A 186-amino-acid chain; its full sequence is UPF0340 protein SEQ_1951 (186 aa).

Belongs to the UPF0340 family.

The polypeptide is UPF0340 protein SEQ_1951 (Streptococcus equi subsp. equi (strain 4047)).